A 350-amino-acid chain; its full sequence is Iron-regulated surface determinant protein A (350 aa).

The first 46 residues, methionine 1 to alanine 46, serve as a signal peptide directing secretion. Residues serine 62–alanine 184 form the NEAT domain. Positions 75, 82, and 166 each coordinate heme. Residues lysine 188–proline 314 form a disordered region. The segment covering lysine 203–proline 214 has biased composition (low complexity). 2 stretches are compositionally biased toward polar residues: residues alanine 252–glutamine 268 and lysine 278–lysine 296. A compositionally biased stretch (basic and acidic residues) spans lysine 299–proline 314. An LPXTG sorting signal motif is present at residues leucine 313 to glycine 317. At threonine 316 the chain carries Pentaglycyl murein peptidoglycan amidated threonine. The propeptide at glycine 317–lysine 350 is removed by sortase A.

Belongs to the IsdA family. In terms of assembly, monomer. Interacts with IsdC. Interacts with IsdB.

The protein localises to the secreted. It localises to the cell wall. In terms of biological role, cell wall-anchored surface receptor that participates in the extraction of heme from oxidized methemoglobin/metHb to enable growth on hemoglobin as a sole iron source. Receives heme from IsdB and transfers it to IsdC. Also plays a role in the inhibition of host immune response. Protects S.aureus against the bactericidal protease activity of apolactoferrin. Decreases bacterial cellular hydrophobicity, which renders S.aureus resistant to bactericidal human skin fatty acids as well as to beta-defensins and cathelicidin. Also binds fibronectin and chains B-beta and gamma of fibrinogen, promoting clumping of S.aureus with fibrinogen. Involved in adherence of S.aureus to human desquamated nasal epithelial cells and is required for nasal colonization. This is Iron-regulated surface determinant protein A (isdA) from Staphylococcus aureus (strain COL).